The primary structure comprises 718 residues: DNA ligase (718 aa).

NAD(+)-binding positions include 44–48 (DADYD), 93–94 (SL), and Glu-127. Residue Lys-129 is the N6-AMP-lysine intermediate of the active site. The NAD(+) site is built by Arg-150, Glu-186, Lys-302, and Lys-326. Residues Cys-432, Cys-435, Cys-456, and Cys-462 each contribute to the Zn(2+) site. The BRCT domain maps to 640–718 (TAGSPVAGKT…EDQWLALISG (79 aa)).

It belongs to the NAD-dependent DNA ligase family. LigA subfamily. Mg(2+) is required as a cofactor. Requires Mn(2+) as cofactor.

The catalysed reaction is NAD(+) + (deoxyribonucleotide)n-3'-hydroxyl + 5'-phospho-(deoxyribonucleotide)m = (deoxyribonucleotide)n+m + AMP + beta-nicotinamide D-nucleotide.. Functionally, DNA ligase that catalyzes the formation of phosphodiester linkages between 5'-phosphoryl and 3'-hydroxyl groups in double-stranded DNA using NAD as a coenzyme and as the energy source for the reaction. It is essential for DNA replication and repair of damaged DNA. The sequence is that of DNA ligase from Rhizobium johnstonii (strain DSM 114642 / LMG 32736 / 3841) (Rhizobium leguminosarum bv. viciae).